A 185-amino-acid chain; its full sequence is Ribosome-recycling factor (185 aa).

The protein belongs to the RRF family.

It localises to the cytoplasm. In terms of biological role, responsible for the release of ribosomes from messenger RNA at the termination of protein biosynthesis. May increase the efficiency of translation by recycling ribosomes from one round of translation to another. This is Ribosome-recycling factor from Shewanella sp. (strain W3-18-1).